Here is a 343-residue protein sequence, read N- to C-terminus: MIRAAIVGGTGYTGVELLRLLANHPNVEIVAITSRTEAGRPVSKLFPNLRGYLDICFTEPEPAQLAAECDVVFFATPHGVAMDMVPALLAQNTRVIDLSADFRLADPTIWEQWYGRPHAAPHLLAEAVYGLPEINREAIRQARLIACPGCYPTAVQLGFLPLLEHQLVDPSRLIADAKSGASGAGRKAALGTLLCEAGENFKAYSVSGHRHLPEIIQGLQWASRSSVDLTFVPHLIPMIRGIHATLYAQLEHEVDLQELYEQRYAPEPFVDVLPPGSHPETRSVRGNNMCRLAIHRPSAGNTVIVLSVTDNLIKGASGQAIQNMNLMFGQEETRGLMHIAVIP.

The active site involves Cys150.

It belongs to the NAGSA dehydrogenase family. Type 1 subfamily.

The protein localises to the cytoplasm. It carries out the reaction N-acetyl-L-glutamate 5-semialdehyde + phosphate + NADP(+) = N-acetyl-L-glutamyl 5-phosphate + NADPH + H(+). It functions in the pathway amino-acid biosynthesis; L-arginine biosynthesis; N(2)-acetyl-L-ornithine from L-glutamate: step 3/4. Catalyzes the NADPH-dependent reduction of N-acetyl-5-glutamyl phosphate to yield N-acetyl-L-glutamate 5-semialdehyde. The sequence is that of N-acetyl-gamma-glutamyl-phosphate reductase from Nitrosococcus oceani (strain ATCC 19707 / BCRC 17464 / JCM 30415 / NCIMB 11848 / C-107).